A 335-amino-acid polypeptide reads, in one-letter code: Partner of xrn-2 protein 1 (335 aa).

The region spanning 7–91 is the XRN2-binding (XTBD) domain; the sequence is VEAEKKLWES…SYVKASAAKK (85 aa). The segment at 95-119 is disordered; that stretch reads VKTSDLEGASDESKKVKMEKSPSPV. Over residues 105-114 the composition is skewed to basic and acidic residues; that stretch reads DESKKVKMEK.

Interacts (via N-terminus) with xrn-2; the interaction is direct.

The protein resides in the nucleus. Its subcellular location is the nucleolus. It is found in the nucleoplasm. Its function is as follows. Plays a role in maintenance of steady-state concentration and turnover of microRNAs (miRNA) by degradation of mature miRNA in complex with the exoribonuclease xrn-2. Stabilizes and enhances the accumulation and activity of the exoribonuclease xrn-2, and thus contributes to miRNA turnover. This chain is Partner of xrn-2 protein 1, found in Caenorhabditis elegans.